Consider the following 335-residue polypeptide: Pro-cathepsin H (335 aa).

The N-terminal stretch at 1 to 22 (MWATLPLLCAGAWLLGVPVCGA) is a signal peptide. The propeptide at 23–97 (AELCVNSLEK…AEIKHKYLWS (75 aa)) is activation peptide. N-linked (GlcNAc...) asparagine glycosylation occurs at Asn-101. 4 cysteine pairs are disulfide-bonded: Cys-102-Cys-327, Cys-138-Cys-181, Cys-172-Cys-214, and Cys-272-Cys-322. Positions 106 to 115 (KSNYLRGTGP) are excised as a propeptide. Cys-141 is a catalytic residue. Asn-230 carries an N-linked (GlcNAc...) asparagine glycan. Catalysis depends on residues His-281 and Asn-301.

Belongs to the peptidase C1 family. Composed of a mini chain and a large chain. The large chain may be split into heavy and light chain. All chains are held together by disulfide bonds.

It localises to the lysosome. The enzyme catalyses Hydrolysis of proteins, acting as an aminopeptidase (notably, cleaving Arg-|-Xaa bonds) as well as an endopeptidase.. Important for the overall degradation of proteins in lysosomes. This chain is Pro-cathepsin H (CTSH), found in Homo sapiens (Human).